A 426-amino-acid chain; its full sequence is Enolase (426 aa).

Residue glutamine 163 participates in (2R)-2-phosphoglycerate binding. Glutamate 205 (proton donor) is an active-site residue. Mg(2+)-binding residues include aspartate 242, glutamate 285, and aspartate 312. (2R)-2-phosphoglycerate-binding residues include lysine 337, arginine 366, serine 367, and lysine 388. The active-site Proton acceptor is the lysine 337.

This sequence belongs to the enolase family. Mg(2+) serves as cofactor.

It is found in the cytoplasm. The protein localises to the secreted. Its subcellular location is the cell surface. It carries out the reaction (2R)-2-phosphoglycerate = phosphoenolpyruvate + H2O. It participates in carbohydrate degradation; glycolysis; pyruvate from D-glyceraldehyde 3-phosphate: step 4/5. Catalyzes the reversible conversion of 2-phosphoglycerate (2-PG) into phosphoenolpyruvate (PEP). It is essential for the degradation of carbohydrates via glycolysis. The polypeptide is Enolase (Phenylobacterium zucineum (strain HLK1)).